An 80-amino-acid chain; its full sequence is Small ribosomal subunit protein bS18 (80 aa).

This sequence belongs to the bacterial ribosomal protein bS18 family. Part of the 30S ribosomal subunit. Forms a tight heterodimer with protein bS6.

Its function is as follows. Binds as a heterodimer with protein bS6 to the central domain of the 16S rRNA, where it helps stabilize the platform of the 30S subunit. This Clostridium botulinum (strain 657 / Type Ba4) protein is Small ribosomal subunit protein bS18.